The primary structure comprises 260 residues: Thiazole synthase (260 aa).

Lys-96 (schiff-base intermediate with DXP) is an active-site residue. 1-deoxy-D-xylulose 5-phosphate-binding positions include Gly-157, 184 to 185, and 206 to 207; these read AG and NT.

This sequence belongs to the ThiG family. As to quaternary structure, homotetramer. Forms heterodimers with either ThiH or ThiS.

Its subcellular location is the cytoplasm. The catalysed reaction is [ThiS sulfur-carrier protein]-C-terminal-Gly-aminoethanethioate + 2-iminoacetate + 1-deoxy-D-xylulose 5-phosphate = [ThiS sulfur-carrier protein]-C-terminal Gly-Gly + 2-[(2R,5Z)-2-carboxy-4-methylthiazol-5(2H)-ylidene]ethyl phosphate + 2 H2O + H(+). The protein operates within cofactor biosynthesis; thiamine diphosphate biosynthesis. Catalyzes the rearrangement of 1-deoxy-D-xylulose 5-phosphate (DXP) to produce the thiazole phosphate moiety of thiamine. Sulfur is provided by the thiocarboxylate moiety of the carrier protein ThiS. In vitro, sulfur can be provided by H(2)S. The sequence is that of Thiazole synthase from Rhodopseudomonas palustris (strain BisA53).